The following is a 213-amino-acid chain: Peptidyl-tRNA hydrolase (213 aa).

Position 26 (Tyr-26) interacts with tRNA. His-31 functions as the Proton acceptor in the catalytic mechanism. Residues Tyr-78, Asn-80, and Asn-126 each coordinate tRNA.

The protein belongs to the PTH family. As to quaternary structure, monomer.

It is found in the cytoplasm. It carries out the reaction an N-acyl-L-alpha-aminoacyl-tRNA + H2O = an N-acyl-L-amino acid + a tRNA + H(+). Functionally, hydrolyzes ribosome-free peptidyl-tRNAs (with 1 or more amino acids incorporated), which drop off the ribosome during protein synthesis, or as a result of ribosome stalling. Its function is as follows. Catalyzes the release of premature peptidyl moieties from peptidyl-tRNA molecules trapped in stalled 50S ribosomal subunits, and thus maintains levels of free tRNAs and 50S ribosomes. This is Peptidyl-tRNA hydrolase from Trichormus variabilis (strain ATCC 29413 / PCC 7937) (Anabaena variabilis).